The chain runs to 959 residues: Isoleucine--tRNA ligase (959 aa).

A 'HIGH' region motif is present at residues 66 to 76; that stretch reads PYANGDLHIGH. E592 contacts L-isoleucyl-5'-AMP. The short motif at 633 to 637 is the 'KMSKS' region element; it reads KMSKS. K636 provides a ligand contact to ATP. C922, C925, C942, and C945 together coordinate Zn(2+).

It belongs to the class-I aminoacyl-tRNA synthetase family. IleS type 1 subfamily. As to quaternary structure, monomer. It depends on Zn(2+) as a cofactor.

The protein localises to the cytoplasm. It catalyses the reaction tRNA(Ile) + L-isoleucine + ATP = L-isoleucyl-tRNA(Ile) + AMP + diphosphate. Catalyzes the attachment of isoleucine to tRNA(Ile). As IleRS can inadvertently accommodate and process structurally similar amino acids such as valine, to avoid such errors it has two additional distinct tRNA(Ile)-dependent editing activities. One activity is designated as 'pretransfer' editing and involves the hydrolysis of activated Val-AMP. The other activity is designated 'posttransfer' editing and involves deacylation of mischarged Val-tRNA(Ile). This chain is Isoleucine--tRNA ligase, found in Ralstonia pickettii (strain 12J).